Reading from the N-terminus, the 267-residue chain is Hydroxyethylthiazole kinase 2 (267 aa).

Methionine 41 lines the substrate pocket. ATP is bound by residues lysine 116 and threonine 166. Glycine 193 contacts substrate.

The protein belongs to the Thz kinase family. It depends on Mg(2+) as a cofactor.

It catalyses the reaction 5-(2-hydroxyethyl)-4-methylthiazole + ATP = 4-methyl-5-(2-phosphooxyethyl)-thiazole + ADP + H(+). Its pathway is cofactor biosynthesis; thiamine diphosphate biosynthesis; 4-methyl-5-(2-phosphoethyl)-thiazole from 5-(2-hydroxyethyl)-4-methylthiazole: step 1/1. Its function is as follows. Catalyzes the phosphorylation of the hydroxyl group of 4-methyl-5-beta-hydroxyethylthiazole (THZ). The sequence is that of Hydroxyethylthiazole kinase 2 from Streptococcus pneumoniae (strain JJA).